Consider the following 326-residue polypeptide: tRNA-modifying protein YgfZ (326 aa).

Residues tryptophan 27 and tryptophan 189 each contribute to the folate site.

This sequence belongs to the tRNA-modifying YgfZ family.

The protein resides in the cytoplasm. Functionally, folate-binding protein involved in regulating the level of ATP-DnaA and in the modification of some tRNAs. It is probably a key factor in regulatory networks that act via tRNA modification, such as initiation of chromosomal replication. The protein is tRNA-modifying protein YgfZ of Shigella dysenteriae serotype 1 (strain Sd197).